Here is a 93-residue protein sequence, read N- to C-terminus: Pyrimidine/purine nucleoside phosphorylase (93 aa).

It belongs to the nucleoside phosphorylase PpnP family.

The catalysed reaction is a purine D-ribonucleoside + phosphate = a purine nucleobase + alpha-D-ribose 1-phosphate. It carries out the reaction adenosine + phosphate = alpha-D-ribose 1-phosphate + adenine. It catalyses the reaction cytidine + phosphate = cytosine + alpha-D-ribose 1-phosphate. The enzyme catalyses guanosine + phosphate = alpha-D-ribose 1-phosphate + guanine. The catalysed reaction is inosine + phosphate = alpha-D-ribose 1-phosphate + hypoxanthine. It carries out the reaction thymidine + phosphate = 2-deoxy-alpha-D-ribose 1-phosphate + thymine. It catalyses the reaction uridine + phosphate = alpha-D-ribose 1-phosphate + uracil. The enzyme catalyses xanthosine + phosphate = alpha-D-ribose 1-phosphate + xanthine. In terms of biological role, catalyzes the phosphorolysis of diverse nucleosides, yielding D-ribose 1-phosphate and the respective free bases. Can use uridine, adenosine, guanosine, cytidine, thymidine, inosine and xanthosine as substrates. Also catalyzes the reverse reactions. The protein is Pyrimidine/purine nucleoside phosphorylase of Pseudomonas paraeruginosa (strain DSM 24068 / PA7) (Pseudomonas aeruginosa (strain PA7)).